The following is a 513-amino-acid chain: MSDQLIIFDTTLRDGEQSPGASMTRDEKLRIARQLERLKVDVIEAGFAASSNGDFEAVKAIADVIKDSTICSLARANDRDISRAAEALRGANRARIHTFIATSALHMEKKLRMSPDEVLEQARLSVRFARNLCGDIEFSPEDGYRSDPDFLCRVLEAVIDEGATTLNIPDTVGYAIPELYGNFIRNLRERVPNSDKAIWSVHCHNDLGMAVANSLAGVKIGGARQVECTINGLGERAGNCSLEEVVMAVKTRRDYFGLDLRVDTSQIVPASRMVAQTTGFVVQPNKAVVGANAFAHASGIHQDGVLKARDTYEIMRAEDVGWSANKIVLGKLSGRNAFKQRLQDLGIALESEAEVNAAFMKFKDLADRKSEIFDEDILALVSDEQSDNQAEHYRLLALSQHSEMGERPHAEVAFAAGDVEHHARSDGNGPVDASIKAIESKVGTGAELLLYSVNAITSGSTESQGEVTVRLQLGGRIVNGVGADPDIVVASAKAYLAALNKLHSKAERVAAQG.

One can recognise a Pyruvate carboxyltransferase domain in the interval 5–268 (LIIFDTTLRD…DLRVDTSQIV (264 aa)). 4 residues coordinate Mn(2+): Asp14, His202, His204, and Asn239. Residues 394–513 (RLLALSQHSE…SKAERVAAQG (120 aa)) form a regulatory domain region.

Belongs to the alpha-IPM synthase/homocitrate synthase family. LeuA type 1 subfamily. Homodimer. The cofactor is Mn(2+).

It localises to the cytoplasm. The enzyme catalyses 3-methyl-2-oxobutanoate + acetyl-CoA + H2O = (2S)-2-isopropylmalate + CoA + H(+). The protein operates within amino-acid biosynthesis; L-leucine biosynthesis; L-leucine from 3-methyl-2-oxobutanoate: step 1/4. Functionally, catalyzes the condensation of the acetyl group of acetyl-CoA with 3-methyl-2-oxobutanoate (2-ketoisovalerate) to form 3-carboxy-3-hydroxy-4-methylpentanoate (2-isopropylmalate). The sequence is that of 2-isopropylmalate synthase from Leptothrix cholodnii (strain ATCC 51168 / LMG 8142 / SP-6) (Leptothrix discophora (strain SP-6)).